The chain runs to 117 residues: Class I hydrophobin 2 (117 aa).

The first 21 residues, 1-21, serve as a signal peptide directing secretion; it reads EIVSLSLSLLAVVPLVVLVIA. Cystine bridges form between C35/C96, C42/C90, C43/C76, and C97/C110.

It belongs to the fungal hydrophobin family. As to quaternary structure, self-assembles to form functional amyloid fibrils called rodlets. Self-assembly into fibrillar rodlets occurs spontaneously at hydrophobic:hydrophilic interfaces and the rodlets further associate laterally to form amphipathic monolayers.

It localises to the secreted. The protein resides in the cell wall. Aerial growth, conidiation, and dispersal of filamentous fungi in the environment rely upon a capability of their secreting small amphipathic proteins called hydrophobins (HPBs) with low sequence identity. Class I can self-assemble into an outermost layer of rodlet bundles on aerial cell surfaces, conferring cellular hydrophobicity that supports fungal growth, development and dispersal; whereas Class II form highly ordered films at water-air interfaces through intermolecular interactions but contribute nothing to the rodlet structure. This Pisolithus tinctorius (Dead man's foot) protein is Class I hydrophobin 2.